We begin with the raw amino-acid sequence, 888 residues long: Bifunctional uridylyltransferase/uridylyl-removing enzyme (888 aa).

Residues 1 to 348 (MATTTDKQVS…YHFAEDKIEP (348 aa)) form a uridylyltransferase region. The uridylyl-removing stretch occupies residues 349 to 709 (INPRFRIINN…LQPTTSRGAT (361 aa)). The HD domain occupies 468–590 (VDEHTILVIR…VGTQQRLDYL (123 aa)). ACT domains are found at residues 710–787 (ELII…DDTM) and 817–888 (ELSI…NIEQ).

This sequence belongs to the GlnD family. Mg(2+) serves as cofactor.

It carries out the reaction [protein-PII]-L-tyrosine + UTP = [protein-PII]-uridylyl-L-tyrosine + diphosphate. The enzyme catalyses [protein-PII]-uridylyl-L-tyrosine + H2O = [protein-PII]-L-tyrosine + UMP + H(+). Uridylyltransferase (UTase) activity is inhibited by glutamine, while glutamine activates uridylyl-removing (UR) activity. Its function is as follows. Modifies, by uridylylation and deuridylylation, the PII regulatory proteins (GlnB and homologs), in response to the nitrogen status of the cell that GlnD senses through the glutamine level. Under low glutamine levels, catalyzes the conversion of the PII proteins and UTP to PII-UMP and PPi, while under higher glutamine levels, GlnD hydrolyzes PII-UMP to PII and UMP (deuridylylation). Thus, controls uridylylation state and activity of the PII proteins, and plays an important role in the regulation of nitrogen assimilation and metabolism. The sequence is that of Bifunctional uridylyltransferase/uridylyl-removing enzyme from Hydrogenovibrio crunogenus (strain DSM 25203 / XCL-2) (Thiomicrospira crunogena).